The chain runs to 437 residues: Ribulose bisphosphate carboxylase-like protein (437 aa).

Residue Lys176 is the Proton acceptor of the active site. Mg(2+)-binding residues include Lys202, Asp204, and Glu205. At Lys202 the chain carries N6-carboxylysine. His293 serves as the catalytic Proton acceptor.

The protein belongs to the RuBisCO large chain family. Type IV subfamily. In terms of assembly, homodimer. Requires Mg(2+) as cofactor.

Its function is as follows. May be involved in sulfur metabolism and oxidative stress response. Does not show RuBisCO activity. This is Ribulose bisphosphate carboxylase-like protein from Archaeoglobus fulgidus (strain ATCC 49558 / DSM 4304 / JCM 9628 / NBRC 100126 / VC-16).